The chain runs to 93 residues: DNA-directed RNA polymerase subunit Rpo11 (93 aa).

Belongs to the archaeal Rpo11/eukaryotic RPB11/RPC19 RNA polymerase subunit family. As to quaternary structure, part of the RNA polymerase complex.

It is found in the cytoplasm. It catalyses the reaction RNA(n) + a ribonucleoside 5'-triphosphate = RNA(n+1) + diphosphate. Its function is as follows. DNA-dependent RNA polymerase (RNAP) catalyzes the transcription of DNA into RNA using the four ribonucleoside triphosphates as substrates. The sequence is that of DNA-directed RNA polymerase subunit Rpo11 from Methanocella arvoryzae (strain DSM 22066 / NBRC 105507 / MRE50).